A 505-amino-acid chain; its full sequence is Trans-cinnamate 4-monooxygenase (505 aa).

The helical transmembrane segment at 3–23 threads the bilayer; the sequence is LILLEKSLLAVFFAVIFSIIV. (E)-cinnamate-binding positions include 213 to 218 and alanine 306; that span reads RSRLAQ. Position 447 (cysteine 447) interacts with heme.

The protein belongs to the cytochrome P450 family. It depends on heme as a cofactor. In terms of tissue distribution, mostly expressed in stems, and, to a lower extent, in bulbs, roots, leaves and flowers.

The protein localises to the membrane. It carries out the reaction (E)-cinnamate + reduced [NADPH--hemoprotein reductase] + O2 = (E)-4-coumarate + oxidized [NADPH--hemoprotein reductase] + H2O + H(+). Its pathway is alkaloid biosynthesis. The protein operates within phenylpropanoid metabolism; trans-4-coumarate biosynthesis; trans-4-coumarate from trans-cinnamate: step 1/1. Its function is as follows. Catalyzes the first oxidative step of the phenylpropanoid pathway in higher plants by transforming trans-cinnamate into p-coumarate. The compounds formed by this pathway are essential components for lignification, pollination, and defense against ultraviolet light, predators and pathogens. Trans-4-coumarate is a precursor to all amaryllidaceae alkaloids such as galanthamine, lycorine and haemanthamine, and including haemanthamine- and crinamine-type alkaloids, promising anticancer agents. The chain is Trans-cinnamate 4-monooxygenase from Narcissus pseudonarcissus (Daffodil).